The following is a 310-amino-acid chain: MNGLSVTELCCLFCCPPCPGRIAAKLAFLPPEPTYSLVPEPEPGPGGAGAAPSGNLRALAGTPGRWKLHLMERADFQYSQRELDTIEVFLTKSSRGNRISCMYVRCVPGARYTVFFSHGNAVDLGQMSSFYIGLGTRINCNIFSYDYSGYGVSSGKPSEKNLYADIDAAWQALRTRYGISPDSIVLYGQSIGTVPTVDLASRYECAAVVLHSPLTSGMRVAFPDTKKTYCFDAFPNIEKVSKITSPVLIIHGTEDEVIDFSHGLALYERCPKAVEPLWVEGAGHNDIELYSQYLERLRRFISQELPSQRA.

Catalysis depends on charge relay system residues serine 190, aspartate 255, and histidine 284. Serine 307 is modified (phosphoserine).

Belongs to the AB hydrolase superfamily. ABHD17 family. Post-translationally, palmitoylated on cysteine residues located in a cysteine cluster at the N-terminus which promotes membrane localization. Palmitoylation is required for post-synaptic localization and for depalmitoylating activity towards DLG4/PSD95.

The protein localises to the cell membrane. The protein resides in the endosome membrane. It localises to the cell projection. Its subcellular location is the dendritic spine. It is found in the postsynaptic density membrane. It carries out the reaction S-hexadecanoyl-L-cysteinyl-[protein] + H2O = L-cysteinyl-[protein] + hexadecanoate + H(+). Hydrolyzes fatty acids from S-acylated cysteine residues in proteins. Has depalmitoylating activity towards NRAS. Has depalmitoylating activity towards DLG4/PSD95. May have depalmitoylating activity towards MAP6. This chain is Alpha/beta hydrolase domain-containing protein 17A, found in Bos taurus (Bovine).